The sequence spans 101 residues: Small ribosomal subunit protein uS14 (101 aa).

This sequence belongs to the universal ribosomal protein uS14 family. In terms of assembly, part of the 30S ribosomal subunit. Contacts proteins S3 and S10.

Binds 16S rRNA, required for the assembly of 30S particles and may also be responsible for determining the conformation of the 16S rRNA at the A site. The polypeptide is Small ribosomal subunit protein uS14 (Chlamydia abortus (strain DSM 27085 / S26/3) (Chlamydophila abortus)).